The sequence spans 736 residues: Glycogen [starch] synthase, muscle (736 aa).

A Phosphoserine; by AMPK and PKA modification is found at Ser8. Ser11 bears the Phosphoserine mark. Lys39 lines the UDP pocket. Positions 205 and 211 each coordinate UDP-alpha-D-glucose. Residues His291, Glu292, Gln294, His297, and Lys301 each contribute to the alpha-D-glucose 6-phosphate site. Arg331 serves as a coordination point for UDP. Arg331 lines the UDP-alpha-D-glucose pocket. Ser412 is subject to Phosphoserine. Position 501 (His501) interacts with alpha-D-glucose 6-phosphate. The UDP-alpha-D-glucose site is built by Glu510, Trp512, and Gly513. Thr515 is a UDP binding site. Arg582 and Arg586 together coordinate alpha-D-glucose 6-phosphate. Residues 631–736 (TQGYRYPRPA…PASSLGEERN (106 aa)) form a disordered region. Residue Ser641 is modified to Phosphoserine; by DYRK2, GSK3-alpha, GSK3-beta and PASK. Phosphoserine; by GSK3-alpha and GSK3-beta is present on residues Ser645 and Ser649. The residue at position 652 (Ser652) is a Phosphoserine. Position 653 is a phosphoserine; by GSK3-alpha and GSK3-beta (Ser653). Residue Ser657 is modified to Phosphoserine; by CK2. A compositionally biased stretch (acidic residues) spans 658 to 681 (EDEEEPRDLPPDEDDERYDEDEEA). Over residues 682–695 (AKDRRNIRAPEWPR) the composition is skewed to basic and acidic residues. Ser698 carries the post-translational modification Phosphoserine. Thr700 carries the post-translational modification Phosphothreonine. Ser709 is subject to Phosphoserine. Positions 714–727 (PSSSVSTPSEPLSP) are enriched in low complexity. Thr720 bears the Phosphothreonine mark. Phosphoserine is present on residues Ser726 and Ser730.

This sequence belongs to the glycosyltransferase 3 family. Part of the GYS1-GYG1 complex, a heterooctamer composed of a tetramer of GYS1 and 2 dimers of GYG1, where each GYS1 protomer binds to one GYG1 subunit (via GYG1 C-terminus); the GYS1 tetramer may dissociate from GYG1 dimers to continue glycogen polymerization on its own. Post-translationally, phosphorylation at Ser-8 by AMPK inactivates the enzyme activity. Primed phosphorylation at Ser-657 (site 5) by CSNK2A1 and CSNK2A2 is required for inhibitory phosphorylation at Ser-641 (site 3a), Ser-645 (site 3b), Ser-649 (site 3c) and Ser-653 (site 4) by GSK3A an GSK3B. Phosphorylated at Ser-641 by PASK, leading to inactivation; phosphorylation by PASK is inhibited by glycogen. Phosphorylated at Ser-641 by DYRK2, leading to inactivation. Dephosphorylation at Ser-641 and Ser-645 by PP1 activates the enzyme.

The catalysed reaction is [(1-&gt;4)-alpha-D-glucosyl](n) + UDP-alpha-D-glucose = [(1-&gt;4)-alpha-D-glucosyl](n+1) + UDP + H(+). It functions in the pathway glycan biosynthesis; glycogen biosynthesis. With respect to regulation, allosteric activation by glucose-6-phosphate. Phosphorylation reduces the activity towards UDP-glucose. When in the non-phosphorylated state, glycogen synthase does not require glucose-6-phosphate as an allosteric activator; when phosphorylated it does. Glycogen synthase participates in the glycogen biosynthetic process along with glycogenin and glycogen branching enzyme. Extends the primer composed of a few glucose units formed by glycogenin by adding new glucose units to it. In this context, glycogen synthase transfers the glycosyl residue from UDP-Glc to the non-reducing end of alpha-1,4-glucan. This chain is Glycogen [starch] synthase, muscle (GYS1), found in Bos taurus (Bovine).